Consider the following 266-residue polypeptide: Enterotoxin type C-3 (266 aa).

The N-terminal stretch at 1 to 27 (MYKRLFISRVILIFALILVISTPNVLA) is a signal peptide. 2 residues coordinate Zn(2+): Asp36 and Asp110. Cys120 and Cys137 form a disulfide bridge. 2 residues coordinate Zn(2+): His145 and His149.

It belongs to the staphylococcal/streptococcal toxin family. As to quaternary structure, interacts with MHC class II molecules composed of alpha/HLA-DRA and beta/HLA-DRB1 chains. Interacts with host T-cell receptor/TCR beta variable chain TRBV8-2.

The protein localises to the secreted. Functionally, staphylococcal enterotoxin that activates the host immune system by binding as unprocessed molecules to major histocompatibility (MHC) complex class II and T-cell receptor (TCR) molecules. In turn, this ternary complex activates a large number of T-lymphocytes initiating a systemic release of pro-inflammatory cytokines. Also causes the intoxication staphylococcal food poisoning syndrome. The chain is Enterotoxin type C-3 (entC3) from Staphylococcus aureus.